We begin with the raw amino-acid sequence, 150 residues long: Large ribosomal subunit protein uL15 (150 aa).

The segment at 1-60 (MKLSDLRPNPGANKRRKRVGRGPGSGHGKTATRGHKGQKSRSGGLKDPRRFEGGRSTTLM) is disordered. Basic residues predominate over residues 30 to 39 (TATRGHKGQK). Over residues 44-53 (GLKDPRRFEG) the composition is skewed to basic and acidic residues.

This sequence belongs to the universal ribosomal protein uL15 family. In terms of assembly, part of the 50S ribosomal subunit.

Binds to the 23S rRNA. This Thermus thermophilus (strain ATCC BAA-163 / DSM 7039 / HB27) protein is Large ribosomal subunit protein uL15.